The primary structure comprises 416 residues: Phosphoribosylamine--glycine ligase (416 aa).

Residues 105–310 (KSFLKKYRIK…PLELILAATQ (206 aa)) enclose the ATP-grasp domain. ATP is bound at residue 131-192 (IYSLTPPIVV…EEFLDGYELS (62 aa)). Positions 281 and 283 each coordinate Mg(2+).

This sequence belongs to the GARS family. Requires Mg(2+) as cofactor. It depends on Mn(2+) as a cofactor.

It catalyses the reaction 5-phospho-beta-D-ribosylamine + glycine + ATP = N(1)-(5-phospho-beta-D-ribosyl)glycinamide + ADP + phosphate + H(+). It functions in the pathway purine metabolism; IMP biosynthesis via de novo pathway; N(1)-(5-phospho-D-ribosyl)glycinamide from 5-phospho-alpha-D-ribose 1-diphosphate: step 2/2. The protein is Phosphoribosylamine--glycine ligase of Campylobacter jejuni subsp. jejuni serotype O:2 (strain ATCC 700819 / NCTC 11168).